The chain runs to 174 residues: Protein GrpE (174 aa).

It belongs to the GrpE family. In terms of assembly, homodimer.

Its subcellular location is the cytoplasm. Its function is as follows. Participates actively in the response to hyperosmotic and heat shock by preventing the aggregation of stress-denatured proteins, in association with DnaK and GrpE. It is the nucleotide exchange factor for DnaK and may function as a thermosensor. Unfolded proteins bind initially to DnaJ; upon interaction with the DnaJ-bound protein, DnaK hydrolyzes its bound ATP, resulting in the formation of a stable complex. GrpE releases ADP from DnaK; ATP binding to DnaK triggers the release of the substrate protein, thus completing the reaction cycle. Several rounds of ATP-dependent interactions between DnaJ, DnaK and GrpE are required for fully efficient folding. This is Protein GrpE from Pseudothermotoga lettingae (strain ATCC BAA-301 / DSM 14385 / NBRC 107922 / TMO) (Thermotoga lettingae).